The chain runs to 288 residues: Fibroblast growth factor 2 (288 aa).

Residues Met1 to Leu142 constitute a propeptide that is removed on maturation. The disordered stretch occupies residues Met1–Pro156. Positions Glu72–Arg84 are enriched in basic and acidic residues. An omega-N-methylarginine; alternate mark is found at Arg108, Arg110, and Arg112. A symmetric dimethylarginine; alternate mark is found at Arg108, Arg110, and Arg112. Low complexity predominate over residues Gly113–Gly132. Asn169 serves as a coordination point for heparin. The Cell attachment site; atypical motif lies at Asp179–Arg181. Tyr215 bears the Phosphotyrosine; by TEC mark. A Cell attachment site; atypical motif is present at residues Asp221 to Arg223. A Glycyl lysine isopeptide (Lys-Gly) (interchain with G-Cter in SUMO1) cross-link involves residue Lys228. A heparin-binding region spans residues Lys261–Lys277.

The protein belongs to the heparin-binding growth factors family. In terms of assembly, monomer. Homodimer. Interacts with FGFR1, FGFR2, FGFR3 and FGFR4. Affinity between fibroblast growth factors (FGFs) and their receptors is increased by heparan sulfate glycosaminoglycans that function as coreceptors. Interacts with CSPG4, FGFBP1 and TEC. Found in a complex with FGFBP1, FGF1 and FGF2. Interacts with FGFBP3. Interacts with integrin ITGAV:ITGB3; the interaction is required for FGF2 signaling. Interacts with SNORC (via the extracellular domain). Interacts with glypican GPC3. Post-translationally, phosphorylation at Tyr-215 regulates FGF2 unconventional secretion.

It is found in the secreted. Its subcellular location is the nucleus. Its function is as follows. Acts as a ligand for FGFR1, FGFR2, FGFR3 and FGFR4. Also acts as an integrin ligand which is required for FGF2 signaling. Binds to integrin ITGAV:ITGB3. Plays an important role in the regulation of cell survival, cell division, cell differentiation and cell migration. Functions as a potent mitogen in vitro. Can induce angiogenesis. Mediates phosphorylation of ERK1/2 and thereby promotes retinal lens fiber differentiation. The sequence is that of Fibroblast growth factor 2 from Pan troglodytes (Chimpanzee).